The sequence spans 444 residues: Phosphoglucosamine mutase (444 aa).

Ser-102 functions as the Phosphoserine intermediate in the catalytic mechanism. Mg(2+) contacts are provided by Ser-102, Asp-241, Asp-243, and Asp-245. The residue at position 102 (Ser-102) is a Phosphoserine.

It belongs to the phosphohexose mutase family. Mg(2+) is required as a cofactor. Activated by phosphorylation.

It catalyses the reaction alpha-D-glucosamine 1-phosphate = D-glucosamine 6-phosphate. Functionally, catalyzes the conversion of glucosamine-6-phosphate to glucosamine-1-phosphate. This chain is Phosphoglucosamine mutase, found in Glaesserella parasuis serovar 5 (strain SH0165) (Haemophilus parasuis).